Consider the following 531-residue polypeptide: Probable mitochondrial-processing peptidase subunit beta, mitochondrial (531 aa).

The transit peptide at 1–78 directs the protein to the mitochondrion; sequence MAMKNLLSLA…ENPDKRFLKY (78 aa). The tract at residues 30 to 50 is disordered; it reads SAIDSVPASASPTALSPPPPH. Zn(2+) is bound at residue H141. E144 acts as the Proton acceptor in catalysis. H145 lines the Zn(2+) pocket. E214 is a catalytic residue. E221 contributes to the Zn(2+) binding site.

This sequence belongs to the peptidase M16 family. In terms of assembly, heterodimer of an alpha subunit and a beta subunit subunits, forming the mitochondrial processing protease (MPP) in which the alpha subunit is involved in substrate recognition and binding and the beta subunit is the catalytic subunit. Component of the ubiquinol-cytochrome c oxidoreductase (cytochrome b-c1 complex, complex III, CIII), a multisubunit enzyme composed of 10 subunits. The complex is composed of 3 respiratory subunits cytochrome b (MT-CYB), cytochrome c1 (CYC1-1 or CYC1-2) and Rieske protein (UCR1-1 or UCR1-2), 2 core protein subunits MPPalpha1 (or MPPalpha2) and MPPB, and 5 low-molecular weight protein subunits QCR7-1 (or QCR7-2), UCRQ-1 (or UCRQ-2), QCR9, UCRY and probably QCR6-1 (or QCR6-2). The complex exists as an obligatory dimer and forms supercomplexes (SCs) in the inner mitochondrial membrane with NADH-ubiquinone oxidoreductase (complex I, CI), resulting in different assemblies (supercomplexes SCI(1)III(2) and SCI(2)III(4)). Zn(2+) is required as a cofactor.

Its subcellular location is the mitochondrion. The protein resides in the mitochondrion inner membrane. The catalysed reaction is Release of N-terminal transit peptides from precursor proteins imported into the mitochondrion, typically with Arg in position P2.. Binding to the alpha subunit is required for catalytic activity. Its function is as follows. Catalytic subunit of the essential mitochondrial processing protease (MPP), which cleaves the mitochondrial sequence off newly imported precursors proteins. Preferentially, cleaves after an arginine at position P2. In terms of biological role, component of the ubiquinol-cytochrome c oxidoreductase, a multisubunit transmembrane complex that is part of the mitochondrial electron transport chain which drives oxidative phosphorylation. The respiratory chain contains 3 multisubunit complexes succinate dehydrogenase (complex II, CII), ubiquinol-cytochrome c oxidoreductase (cytochrome b-c1 complex, complex III, CIII) and cytochrome c oxidase (complex IV, CIV), that cooperate to transfer electrons derived from NADH and succinate to molecular oxygen, creating an electrochemical gradient over the inner membrane that drives transmembrane transport and the ATP synthase. The cytochrome b-c1 complex catalyzes electron transfer from ubiquinol to cytochrome c, linking this redox reaction to translocation of protons across the mitochondrial inner membrane, with protons being carried across the membrane as hydrogens on the quinol. In the process called Q cycle, 2 protons are consumed from the matrix, 4 protons are released into the intermembrane space and 2 electrons are passed to cytochrome c. This chain is Probable mitochondrial-processing peptidase subunit beta, mitochondrial (MPPbeta), found in Arabidopsis thaliana (Mouse-ear cress).